Here is a 245-residue protein sequence, read N- to C-terminus: Geranylgeranylglyceryl phosphate synthase (245 aa).

Residues D22 and S51 each contribute to the Mg(2+) site. Sn-glycerol 1-phosphate is bound by residues 169-175, 200-201, and 222-223; these read YLEAGSG, GG, and GT.

This sequence belongs to the GGGP/HepGP synthase family. Group II subfamily. In terms of assembly, homopentamer. Requires Mg(2+) as cofactor.

The protein localises to the cytoplasm. It catalyses the reaction sn-glycerol 1-phosphate + (2E,6E,10E)-geranylgeranyl diphosphate = sn-3-O-(geranylgeranyl)glycerol 1-phosphate + diphosphate. It participates in membrane lipid metabolism; glycerophospholipid metabolism. Inhibited by EDTA in vitro. Its function is as follows. Prenyltransferase that catalyzes the transfer of the geranylgeranyl moiety of geranylgeranyl diphosphate (GGPP) to the C3 hydroxyl of sn-glycerol-1-phosphate (G1P). This reaction is the first ether-bond-formation step in the biosynthesis of archaeal membrane lipids. Cannot use sn-glycerol-3-phosphate (G3P) or dihydroxyacetonephosphate (DHAP) as substrate. This chain is Geranylgeranylglyceryl phosphate synthase, found in Methanothermobacter marburgensis (strain ATCC BAA-927 / DSM 2133 / JCM 14651 / NBRC 100331 / OCM 82 / Marburg) (Methanobacterium thermoautotrophicum).